Reading from the N-terminus, the 553-residue chain is Protein DA1-related 1 (553 aa).

Positions 10 to 41 (GSSHKFSDGQCNGRYREDRNLEGPRYSAEGSD) are disordered. The UIM 1 domain maps to 42 to 61 (FDKEEIECAIALSLSEQEHV). Residues 62–77 (IPQDDKGKKIIEYKSE) show a composition bias toward basic and acidic residues. Positions 62 to 91 (IPQDDKGKKIIEYKSETEEDDDDDEDEDEE) are disordered. Positions 78–91 (TEEDDDDDEDEDEE) are enriched in acidic residues. The 20-residue stretch at 87–106 (DEDEEYMRAQLEAAEEEERR) folds into the UIM 2 domain. A UIM 3; degenerate domain is found at 122–141 (AQLEETEKLLAKARLEEEEM). The region spanning 149-168 (EEDELLAKALQESMNVGSPP) is the UIM 4 domain. Serine 166 is modified (phosphoserine). The LIM zinc-binding domain occupies 188 to 248 (RICVGCQAEI…KLCYKEQHHP (61 aa)).

In terms of assembly, interacts with ubiquitin, TCP14 and TCP15. Polyubiquitinated by DA2.

Acts redundantly with DA1 and DAR2 to regulate endoreduplication during leaf development. Together with DA1 and DAR2, modulates the protein stability of the transcription factors TCP14 and TCP15, which repress endoreduplication by directly regulating the expression of cell-cycle genes. The chain is Protein DA1-related 1 from Arabidopsis thaliana (Mouse-ear cress).